Reading from the N-terminus, the 214-residue chain is ATP-dependent Clp protease proteolytic subunit 2 (214 aa).

Serine 110 functions as the Nucleophile in the catalytic mechanism. Residue histidine 135 is part of the active site.

Belongs to the peptidase S14 family. In terms of assembly, fourteen ClpP subunits assemble into 2 heptameric rings which stack back to back to give a disk-like structure with a central cavity, resembling the structure of eukaryotic proteasomes.

The protein resides in the cytoplasm. It catalyses the reaction Hydrolysis of proteins to small peptides in the presence of ATP and magnesium. alpha-casein is the usual test substrate. In the absence of ATP, only oligopeptides shorter than five residues are hydrolyzed (such as succinyl-Leu-Tyr-|-NHMec, and Leu-Tyr-Leu-|-Tyr-Trp, in which cleavage of the -Tyr-|-Leu- and -Tyr-|-Trp bonds also occurs).. In terms of biological role, cleaves peptides in various proteins in a process that requires ATP hydrolysis. Has a chymotrypsin-like activity. Plays a major role in the degradation of misfolded proteins. In Mycobacterium leprae (strain TN), this protein is ATP-dependent Clp protease proteolytic subunit 2.